The sequence spans 139 residues: Nucleoside diphosphate kinase (139 aa).

ATP is bound by residues Lys-10, Phe-58, Arg-86, Thr-92, Arg-103, and Asn-113. His-116 functions as the Pros-phosphohistidine intermediate in the catalytic mechanism.

Belongs to the NDK family. Homotetramer. Requires Mg(2+) as cofactor.

Its subcellular location is the cytoplasm. It catalyses the reaction a 2'-deoxyribonucleoside 5'-diphosphate + ATP = a 2'-deoxyribonucleoside 5'-triphosphate + ADP. The catalysed reaction is a ribonucleoside 5'-diphosphate + ATP = a ribonucleoside 5'-triphosphate + ADP. Its function is as follows. Major role in the synthesis of nucleoside triphosphates other than ATP. The ATP gamma phosphate is transferred to the NDP beta phosphate via a ping-pong mechanism, using a phosphorylated active-site intermediate. The sequence is that of Nucleoside diphosphate kinase from Caulobacter vibrioides (strain ATCC 19089 / CIP 103742 / CB 15) (Caulobacter crescentus).